We begin with the raw amino-acid sequence, 225 residues long: Membrane protein (225 aa).

Topologically, residues 1–20 are virion surface; the sequence is MSNETNCTLDFEQSVELFKE. A helical membrane pass occupies residues 21-41; sequence YNLFITAFLLFLTIILQYGYA. Topologically, residues 42–51 are intravirion; that stretch reads TRSKFIYILK. Residues 52–72 form a helical membrane-spanning segment; the sequence is MIVLWCFWPLNIAVGVISCIY. The Virion surface segment spans residues 73–77; the sequence is PPNTG. A helical transmembrane segment spans residues 78–98; that stretch reads GLVAAIILTVFACLSFVGYWI. The Intravirion segment spans residues 99–225; sequence QSIRLFKRCR…VATGGSSLYT (127 aa).

The protein belongs to the gammacoronaviruses M protein family. In terms of assembly, homomultimer. Interacts with envelope E protein in the budding compartment of the host cell, which is located between endoplasmic reticulum and the Golgi complex. Forms a complex with HE and S proteins. Interacts with nucleocapsid N protein. This interaction probably participates in RNA packaging into the virus.

The protein localises to the virion membrane. It is found in the host Golgi apparatus membrane. Its function is as follows. Component of the viral envelope that plays a central role in virus morphogenesis and assembly via its interactions with other viral proteins. The protein is Membrane protein of Gallus gallus (Chicken).